The chain runs to 113 residues: Large ribosomal subunit protein uL22 (113 aa).

It belongs to the universal ribosomal protein uL22 family. Part of the 50S ribosomal subunit.

This protein binds specifically to 23S rRNA; its binding is stimulated by other ribosomal proteins, e.g. L4, L17, and L20. It is important during the early stages of 50S assembly. It makes multiple contacts with different domains of the 23S rRNA in the assembled 50S subunit and ribosome. In terms of biological role, the globular domain of the protein is located near the polypeptide exit tunnel on the outside of the subunit, while an extended beta-hairpin is found that lines the wall of the exit tunnel in the center of the 70S ribosome. The polypeptide is Large ribosomal subunit protein uL22 (Geobacillus sp. (strain WCH70)).